Consider the following 157-residue polypeptide: Nascent polypeptide-associated complex subunit beta (157 aa).

The interval 1-28 (MPVDPEKLAKLQKSSAKKVGGSRVKAKK) is disordered. Residues 33-98 (EQDDTKLIEA…PQEKNITQLI (66 aa)) form the NAC-A/B domain. The segment at 124-157 (KTPKDFNTGSANAAADAGGEDIPDLVDQKFDDVE) is disordered.

The protein belongs to the NAC-beta family. In terms of assembly, part of the nascent polypeptide-associated complex (NAC), consisting of EGD2 and EGD1. NAC associates with ribosomes via EGD1.

The protein resides in the cytoplasm. The protein localises to the nucleus. Functionally, component of the nascent polypeptide-associated complex (NAC), a dynamic component of the ribosomal exit tunnel, protecting the emerging polypeptides from interaction with other cytoplasmic proteins to ensure appropriate nascent protein targeting. The NAC complex also promotes mitochondrial protein import by enhancing productive ribosome interactions with the outer mitochondrial membrane and blocks the inappropriate interaction of ribosomes translating non-secretory nascent polypeptides with translocation sites in the membrane of the endoplasmic reticulum. EGD1 may act as a transcription factor that exert a negative effect on the expression of several genes that are transcribed by RNA polymerase II. This chain is Nascent polypeptide-associated complex subunit beta (EGD1), found in Candida albicans (strain SC5314 / ATCC MYA-2876) (Yeast).